The chain runs to 426 residues: 5-methylthioadenosine/S-adenosylhomocysteine deaminase (426 aa).

Zn(2+) is bound by residues His-60 and His-62. 2 residues coordinate substrate: Glu-89 and His-179. A Zn(2+)-binding site is contributed by His-206. Substrate-binding residues include Glu-209 and Asp-294. Position 294 (Asp-294) interacts with Zn(2+).

The protein belongs to the metallo-dependent hydrolases superfamily. MTA/SAH deaminase family. The cofactor is Zn(2+).

The catalysed reaction is S-adenosyl-L-homocysteine + H2O + H(+) = S-inosyl-L-homocysteine + NH4(+). It carries out the reaction S-methyl-5'-thioadenosine + H2O + H(+) = S-methyl-5'-thioinosine + NH4(+). In terms of biological role, catalyzes the deamination of 5-methylthioadenosine and S-adenosyl-L-homocysteine into 5-methylthioinosine and S-inosyl-L-homocysteine, respectively. Is also able to deaminate adenosine. This Dictyoglomus turgidum (strain DSM 6724 / Z-1310) protein is 5-methylthioadenosine/S-adenosylhomocysteine deaminase.